A 291-amino-acid chain; its full sequence is Exosome complex exonuclease RRP42 (291 aa).

The residue at position 2 (Ala2) is an N-acetylalanine. Residue Lys116 is modified to N6-acetyllysine.

Belongs to the RNase PH family. Component of the RNA exosome core complex (Exo-9), composed of EXOSC1, EXOSC2, EXOSC3, EXOSC4, EXOSC5, EXOSC6, EXOSC7, EXOSC8 and EXOSC9; within the complex interacts with EXOSC2 and EXOSC4. The catalytically inactive RNA exosome core complex (Exo-9) associates with the catalytic subunit EXOSC10/RRP6. Exo-9 may associate with DIS3 to form the nucleolar exosome complex, or DIS3L to form the cytoplasmic exosome complex. Exo-9 is formed by a hexameric base ring consisting of the heterodimers EXOSC4-EXOSC9, EXOSC5-EXOSC8 and EXOSC6-EXOSC7, and a cap ring consisting of EXOSC1, EXOSC2 and EXOSC3. The RNA exosome complex associates with cofactors C1D/RRP47, MPHOSPH6/MPP6 and MTREX/MTR4. Interacts with ZC3HAV1. Interacts with DIS3; the interaction is direct.

Its subcellular location is the nucleus. The protein localises to the nucleolus. The protein resides in the cytoplasm. Non-catalytic component of the RNA exosome complex which has 3'-&gt;5' exoribonuclease activity and participates in a multitude of cellular RNA processing and degradation events. In the nucleus, the RNA exosome complex is involved in proper maturation of stable RNA species such as rRNA, snRNA and snoRNA, in the elimination of RNA processing by-products and non-coding 'pervasive' transcripts, such as antisense RNA species and promoter-upstream transcripts (PROMPTs), and of mRNAs with processing defects, thereby limiting or excluding their export to the cytoplasm. The RNA exosome may be involved in Ig class switch recombination (CSR) and/or Ig variable region somatic hypermutation (SHM) by targeting AICDA deamination activity to transcribed dsDNA substrates. In the cytoplasm, the RNA exosome complex is involved in general mRNA turnover and specifically degrades inherently unstable mRNAs containing AU-rich elements (AREs) within their 3' untranslated regions, and in RNA surveillance pathways, preventing translation of aberrant mRNAs. It seems to be involved in degradation of histone mRNA. The catalytic inactive RNA exosome core complex of 9 subunits (Exo-9) is proposed to play a pivotal role in the binding and presentation of RNA for ribonucleolysis, and to serve as a scaffold for the association with catalytic subunits and accessory proteins or complexes. The polypeptide is Exosome complex exonuclease RRP42 (Exosc7) (Mus musculus (Mouse)).